We begin with the raw amino-acid sequence, 690 residues long: Putative glycerophosphocholine phosphodiesterase GPCPD1 homolog 1 (690 aa).

The CBM20 domain maps to 1–122 (MDQDYKAHFK…RKNITDQFGS (122 aa)). The GP-PDE domain occupies 344 to 654 (MLQIGHRGMG…DRIGEDEVLK (311 aa)). Residues 670 to 690 (ARSQHNSRSPSMSRRCMSTVE) form a disordered region. The segment covering 676–690 (SRSPSMSRRCMSTVE) has biased composition (low complexity).

The protein belongs to the glycerophosphoryl diester phosphodiesterase family.

The protein is Putative glycerophosphocholine phosphodiesterase GPCPD1 homolog 1 of Caenorhabditis elegans.